Reading from the N-terminus, the 213-residue chain is Uridine kinase (213 aa).

An ATP-binding site is contributed by 12–19 (GGSCSGKT).

The protein belongs to the uridine kinase family.

It is found in the cytoplasm. It catalyses the reaction uridine + ATP = UMP + ADP + H(+). The enzyme catalyses cytidine + ATP = CMP + ADP + H(+). It functions in the pathway pyrimidine metabolism; CTP biosynthesis via salvage pathway; CTP from cytidine: step 1/3. The protein operates within pyrimidine metabolism; UMP biosynthesis via salvage pathway; UMP from uridine: step 1/1. The polypeptide is Uridine kinase (udk) (Mycoplasma genitalium (strain ATCC 33530 / DSM 19775 / NCTC 10195 / G37) (Mycoplasmoides genitalium)).